The sequence spans 321 residues: Probable 2-oxoglutarate-dependent dioxygenase AOP1.2 (321 aa).

Positions 165 to 270 constitute a Fe2OG dioxygenase domain; the sequence is TYYLTRLMKY…RYSTGLFSIP (106 aa). Fe cation is bound by residues H194, D196, and H251. A 2-oxoglutarate-binding site is contributed by R261.

It belongs to the iron/ascorbate-dependent oxidoreductase family. The cofactor is Fe(2+).

Functionally, probable 2-oxoglutarate-dependent dioxygenase that may be involved in glucosinolates biosynthesis. May play a role in the production of aliphatic glucosinolates. This Arabidopsis thaliana (Mouse-ear cress) protein is Probable 2-oxoglutarate-dependent dioxygenase AOP1.2 (AOP1.2).